We begin with the raw amino-acid sequence, 279 residues long: Dermonecrotic toxin LbSicTox-alphaIB1a (279 aa).

The active site involves H11. Mg(2+)-binding residues include E31 and D33. H47 functions as the Nucleophile in the catalytic mechanism. Disulfide bonds link C51-C57 and C53-C196. D91 is a Mg(2+) binding site.

This sequence belongs to the arthropod phospholipase D family. Class II subfamily. Class IIa sub-subfamily. Requires Mg(2+) as cofactor. In terms of tissue distribution, expressed by the venom gland.

The protein localises to the secreted. It catalyses the reaction an N-(acyl)-sphingosylphosphocholine = an N-(acyl)-sphingosyl-1,3-cyclic phosphate + choline. The catalysed reaction is an N-(acyl)-sphingosylphosphoethanolamine = an N-(acyl)-sphingosyl-1,3-cyclic phosphate + ethanolamine. The enzyme catalyses a 1-acyl-sn-glycero-3-phosphocholine = a 1-acyl-sn-glycero-2,3-cyclic phosphate + choline. It carries out the reaction a 1-acyl-sn-glycero-3-phosphoethanolamine = a 1-acyl-sn-glycero-2,3-cyclic phosphate + ethanolamine. Its function is as follows. Dermonecrotic toxins cleave the phosphodiester linkage between the phosphate and headgroup of certain phospholipids (sphingolipid and lysolipid substrates), forming an alcohol (often choline) and a cyclic phosphate. This toxin acts on sphingomyelin (SM) with high activity (about 30.5-31.5 U/mg). It may also act on ceramide phosphoethanolamine (CPE), lysophosphatidylcholine (LPC) and lysophosphatidylethanolamine (LPE), but not on lysophosphatidylserine (LPS), and lysophosphatidylglycerol (LPG). It acts by transphosphatidylation, releasing exclusively cyclic phosphate products as second products. Induces dermonecrosis, hemolysis, increased vascular permeability, edema, inflammatory response, and platelet aggregation. Is lethal to mice. This is Dermonecrotic toxin LbSicTox-alphaIB1a from Loxosceles boneti (North American fiddleback spider).